Here is a 220-residue protein sequence, read N- to C-terminus: Small ribosomal subunit protein uS3 (220 aa).

The 69-residue stretch at 38 to 106 folds into the KH type-2 domain; that stretch reads IRKYVKGRLK…RVHININEIK (69 aa).

The protein belongs to the universal ribosomal protein uS3 family. As to quaternary structure, part of the 30S ribosomal subunit. Forms a tight complex with proteins S10 and S14.

Its function is as follows. Binds the lower part of the 30S subunit head. Binds mRNA in the 70S ribosome, positioning it for translation. The chain is Small ribosomal subunit protein uS3 from Brevibacillus brevis (strain 47 / JCM 6285 / NBRC 100599).